The following is a 160-amino-acid chain: Transcription antitermination protein NusB (160 aa).

Belongs to the NusB family.

Its function is as follows. Involved in transcription antitermination. Required for transcription of ribosomal RNA (rRNA) genes. Binds specifically to the boxA antiterminator sequence of the ribosomal RNA (rrn) operons. This Maricaulis maris (strain MCS10) (Caulobacter maris) protein is Transcription antitermination protein NusB.